Consider the following 240-residue polypeptide: Uridylate kinase (240 aa).

Residue 12–15 (KLSG) participates in ATP binding. Positions 20-25 (GDQGKG) are involved in allosteric activation by GTP. Glycine 54 serves as a coordination point for UMP. Residues glycine 55 and arginine 59 each coordinate ATP. Residues aspartate 74 and 135-142 (TGSPYFST) each bind UMP. Residues asparagine 163, tyrosine 169, and aspartate 172 each contribute to the ATP site.

It belongs to the UMP kinase family. In terms of assembly, homohexamer.

The protein resides in the cytoplasm. The enzyme catalyses UMP + ATP = UDP + ADP. Its pathway is pyrimidine metabolism; CTP biosynthesis via de novo pathway; UDP from UMP (UMPK route): step 1/1. Allosterically activated by GTP. Inhibited by UTP. In terms of biological role, catalyzes the reversible phosphorylation of UMP to UDP. The polypeptide is Uridylate kinase (Ligilactobacillus salivarius (strain UCC118) (Lactobacillus salivarius)).